The chain runs to 545 residues: Probable bifunctional tRNA threonylcarbamoyladenosine biosynthesis protein (545 aa).

The interval 1 to 329 (MDTSKDLICI…YRSDMVEVNW (329 aa)) is kae1. Residues His-112, His-116, and Tyr-133 each contribute to the Fe cation site. L-threonylcarbamoyladenylate contacts are provided by residues 133–137 (YVSGG), Asp-165, Gly-178, Glu-182, and Asn-262. Position 290 (Asp-290) interacts with Fe cation. The region spanning 344–545 (IIPEHLIGKG…KEVEKRARYL (202 aa)) is the Protein kinase domain. Residues 350 to 358 (IGKGAEADI) and Lys-371 contribute to the ATP site. The active-site Proton acceptor; for kinase activity is the Asp-463.

The protein in the N-terminal section; belongs to the KAE1 / TsaD family. This sequence in the C-terminal section; belongs to the protein kinase superfamily. Tyr protein kinase family. BUD32 subfamily. Component of the KEOPS complex that consists of Kae1, Bud32, Cgi121 and Pcc1; the whole complex dimerizes. Requires Fe(2+) as cofactor.

The protein localises to the cytoplasm. The enzyme catalyses L-seryl-[protein] + ATP = O-phospho-L-seryl-[protein] + ADP + H(+). It catalyses the reaction L-threonyl-[protein] + ATP = O-phospho-L-threonyl-[protein] + ADP + H(+). The catalysed reaction is L-threonylcarbamoyladenylate + adenosine(37) in tRNA = N(6)-L-threonylcarbamoyladenosine(37) in tRNA + AMP + H(+). Required for the formation of a threonylcarbamoyl group on adenosine at position 37 (t(6)A37) in tRNAs that read codons beginning with adenine. Is a component of the KEOPS complex that is probably involved in the transfer of the threonylcarbamoyl moiety of threonylcarbamoyl-AMP (TC-AMP) to the N6 group of A37. The Kae1 domain likely plays a direct catalytic role in this reaction. The Bud32 domain probably displays kinase activity that regulates Kae1 function. The chain is Probable bifunctional tRNA threonylcarbamoyladenosine biosynthesis protein from Methanococcus maripaludis (strain C5 / ATCC BAA-1333).